A 537-amino-acid polypeptide reads, in one-letter code: Zinc finger protein 835 (537 aa).

Residues 12-109 (AELEGNWKHE…RERGGGPKKP (98 aa)) are disordered. Positions 63 to 77 (TISSPAATQASVPDD) are enriched in polar residues. The span at 89–104 (SPKERHPDSRQRERGG) shows a compositional bias: basic and acidic residues. 14 C2H2-type zinc fingers span residues 110–132 (WKCGDCGKAFSYCSAFILHQRIH), 138–160 (FACPECGKAFSQSVHLTLHQRTH), 166–188 (YACHECGKAFSQGSYLASHWRTH), 194–216 (HRCADCGKAFTRVTHLTQHRRVH), 222–244 (YACAQCAKAFRNRSSLIEHQRIH), 250–272 (YECSACAKAFRFSSALIRHQRIH), 278–300 (YRCGQCAKAFAQIAHLTQHRRVH), 306–328 (YTCQDCGALFSQSASLAEHRRIH), 334–356 (YACGQCAKAFTQVSHLTQHQRTH), 362–384 (YPCHDCGKRFSNRSHLLQHRLVH), 390–412 (YRCLQCGAAFSHVSSLIEHQKIH), 418–440 (YKCGECGKAFSQGSSLALHQRTH), 446–468 (YTCPECGKAFSNRSYLIQHHIVH), and 474–496 (YECSGCGKAFSFSSALIRHQRTH). The disordered stretch occupies residues 497-537 (ADSSGRLCPAPTPDSTPGLSQGGETCQQGCPGRNPRGPAED). Residues 509-524 (PDSTPGLSQGGETCQQ) are compositionally biased toward polar residues.

Belongs to the krueppel C2H2-type zinc-finger protein family.

It localises to the nucleus. Its function is as follows. May be involved in transcriptional regulation. In Homo sapiens (Human), this protein is Zinc finger protein 835 (ZNF835).